Reading from the N-terminus, the 134-residue chain is Large ribosomal subunit protein bL20 (134 aa).

The protein belongs to the bacterial ribosomal protein bL20 family.

Functionally, binds directly to 23S ribosomal RNA and is necessary for the in vitro assembly process of the 50S ribosomal subunit. It is not involved in the protein synthesizing functions of that subunit. This is Large ribosomal subunit protein bL20 from Rhizobium leguminosarum bv. trifolii (strain WSM2304).